Here is a 152-residue protein sequence, read N- to C-terminus: Superoxide dismutase [Cu-Zn] (152 aa).

Cu cation contacts are provided by histidine 45, histidine 47, and histidine 62. Cysteines 56 and 145 form a disulfide. 4 residues coordinate Zn(2+): histidine 62, histidine 70, histidine 79, and aspartate 82. A Cu cation-binding site is contributed by histidine 119.

The protein belongs to the Cu-Zn superoxide dismutase family. Homodimer. Cu cation is required as a cofactor. The cofactor is Zn(2+).

The protein localises to the cytoplasm. It carries out the reaction 2 superoxide + 2 H(+) = H2O2 + O2. Destroys radicals which are normally produced within the cells and which are toxic to biological systems. This is Superoxide dismutase [Cu-Zn] (SODCC) from Paulownia kawakamii (Dragon tree).